The primary structure comprises 313 residues: Spermatid maturation protein 1 (313 aa).

A helical transmembrane segment spans residues 29–49; that stretch reads ILLLLGLIICINIGINMVTLL. 4 disordered regions span residues 71-90, 97-151, 243-263, and 291-313; these read KLRS…PAVH, AVKM…HNWD, EPPI…SSGR, and LASG…MTER. Residues 76–85 are compositionally biased toward polar residues; sequence GKQTQPSKHS. Residues 107 to 122 are compositionally biased toward basic residues; sequence TRRRHRRGSSSRRARR. Residues 263–289 adopt a coiled-coil conformation; it reads RVTYDARDVRRRLRELTREVEALSHCY. The span at 300–313 shows a compositional bias: basic and acidic residues; sequence GTRKDWVYRSMTER.

The protein resides in the membrane. Its subcellular location is the cytoplasm. In terms of biological role, required for proper cytoplasm removal during spermatogenesis. This chain is Spermatid maturation protein 1 (SPEM1), found in Bos taurus (Bovine).